Consider the following 119-residue polypeptide: Circadian clock oscillator protein KaiB (119 aa).

Belongs to the KaiB family. As to quaternary structure, may undergo a major conformational rearrangment; in the free state forms homooligomers. When bound to KaiC switches to a monomeric thioredoxin-fold (KaiB(fs)). The active oscillator complex is probably KaiC(6):KaiB(6).

Its function is as follows. Component of the KaiBC clock protein complex, which constitutes the main circadian regulator in cyanobacteria; it may modify the ATPase activity of KaiC. May be a metamorphic protein which reversibly switches between an inactive tetrameric fold and a rare, thioredoxin-like monomeric fold (KaiB(fs)). KaiB(fs) binds phospho-KaiC, and perhaps clock output effectors. This chain is Circadian clock oscillator protein KaiB, found in Prochlorococcus marinus (strain MIT 9313).